Reading from the N-terminus, the 144-residue chain is Methylglyoxal synthase (144 aa).

In terms of domain architecture, MGS-like spans M1–R144. Substrate-binding positions include H8, K12, T34–T37, and S54–G55. The active-site Proton donor/acceptor is the D60. A substrate-binding site is contributed by H87.

Belongs to the methylglyoxal synthase family.

It carries out the reaction dihydroxyacetone phosphate = methylglyoxal + phosphate. Its function is as follows. Catalyzes the formation of methylglyoxal from dihydroxyacetone phosphate. This Geobacillus thermodenitrificans (strain NG80-2) protein is Methylglyoxal synthase.